A 120-amino-acid chain; its full sequence is ATP-dependent Clp protease adapter protein ClpS (120 aa).

This sequence belongs to the ClpS family. Binds to the N-terminal domain of the chaperone ClpA.

Its function is as follows. Involved in the modulation of the specificity of the ClpAP-mediated ATP-dependent protein degradation. This Pseudomonas syringae pv. tomato (strain ATCC BAA-871 / DC3000) protein is ATP-dependent Clp protease adapter protein ClpS.